A 100-amino-acid polypeptide reads, in one-letter code: Chorion class A protein M2774 (100 aa).

Positions 1–33 (GGGWNGWNGLGGGWNGLGVGWSRLDGGYGGGCG) are left arm. The interval 34–81 (SYGGEGIGNVGVADELPVGGVTAVGGRVPIIGGVEYGGPARAAGAVSI) is central domain. Positions 82–100 (CGHCAPTCGCGRAGLGGYY) are right arm.

It belongs to the chorion protein family.

This protein is one of many from the eggshell of the silk moth. This Bombyx mori (Silk moth) protein is Chorion class A protein M2774.